Consider the following 329-residue polypeptide: 4-hydroxythreonine-4-phosphate dehydrogenase (329 aa).

2 residues coordinate substrate: H136 and T137. 3 residues coordinate a divalent metal cation: H166, H211, and H266. K274, N283, and R292 together coordinate substrate.

Belongs to the PdxA family. In terms of assembly, homodimer. It depends on Zn(2+) as a cofactor. The cofactor is Mg(2+). Co(2+) is required as a cofactor.

Its subcellular location is the cytoplasm. The catalysed reaction is 4-(phosphooxy)-L-threonine + NAD(+) = 3-amino-2-oxopropyl phosphate + CO2 + NADH. The protein operates within cofactor biosynthesis; pyridoxine 5'-phosphate biosynthesis; pyridoxine 5'-phosphate from D-erythrose 4-phosphate: step 4/5. Functionally, catalyzes the NAD(P)-dependent oxidation of 4-(phosphooxy)-L-threonine (HTP) into 2-amino-3-oxo-4-(phosphooxy)butyric acid which spontaneously decarboxylates to form 3-amino-2-oxopropyl phosphate (AHAP). The sequence is that of 4-hydroxythreonine-4-phosphate dehydrogenase from Escherichia coli (strain K12 / MC4100 / BW2952).